A 450-amino-acid chain; its full sequence is UDP-N-acetylmuramoylalanine--D-glutamate ligase (450 aa).

Residue 119 to 125 (GSNGKTT) participates in ATP binding.

Belongs to the MurCDEF family.

The protein localises to the cytoplasm. The enzyme catalyses UDP-N-acetyl-alpha-D-muramoyl-L-alanine + D-glutamate + ATP = UDP-N-acetyl-alpha-D-muramoyl-L-alanyl-D-glutamate + ADP + phosphate + H(+). It functions in the pathway cell wall biogenesis; peptidoglycan biosynthesis. In terms of biological role, cell wall formation. Catalyzes the addition of glutamate to the nucleotide precursor UDP-N-acetylmuramoyl-L-alanine (UMA). The sequence is that of UDP-N-acetylmuramoylalanine--D-glutamate ligase from Streptococcus pneumoniae serotype 19F (strain G54).